The primary structure comprises 258 residues: Chymotrypsin-2 (258 aa).

The N-terminal stretch at 1–17 (MLRKVFAVVSVLLVVSA) is a signal peptide. Residues 18–32 (AKVTKLVLDDHYVNR) constitute a propeptide, activation peptide. The Peptidase S1 domain maps to 33–255 (VVGGEVAKNG…YHEWVRTTMA (223 aa)). A disulfide bridge links Cys-59 with Cys-75. Catalysis depends on charge relay system residues His-74 and Asp-119. Intrachain disulfides connect Cys-182-Cys-198 and Cys-208-Cys-232. Ser-212 functions as the Charge relay system in the catalytic mechanism.

The protein belongs to the peptidase S1 family. As to expression, after blood feeding, expression is induced in the midgut epithelium, followed by secretion into the midgut lumen.

Its subcellular location is the secreted. It catalyses the reaction Preferential cleavage: Tyr-|-Xaa, Trp-|-Xaa, Phe-|-Xaa, Leu-|-Xaa.. The polypeptide is Chymotrypsin-2 (CHYM2) (Anopheles gambiae (African malaria mosquito)).